The primary structure comprises 2871 residues: Fibrillin-1 (2871 aa).

Positions 1 to 24 (MRRGRLLEVALGFTVLLASYTSHR) are cleaved as a signal peptide. A propeptide spanning residues 25-44 (AEANLEAGNGKETRASRAKR) is cleaved from the precursor. Residues 29–39 (LEAGNGKETRA) are compositionally biased toward basic and acidic residues. The interval 29–49 (LEAGNGKETRASRAKRRGGGG) is disordered. Residues 45-81 (RGGGGHDALKGPNVCGSRYNAYCCPGWKTLPGGNQCI) are fibrillin unique N-terminal (FUN) domain. Residues 45–450 (RGGGGHDALK…PPRVLPVNVT (406 aa)) are N-terminal domain. 11 disulfide bridges follow: cysteine 59–cysteine 68, cysteine 67–cysteine 80, cysteine 85–cysteine 94, cysteine 89–cysteine 100, cysteine 102–cysteine 111, cysteine 119–cysteine 129, cysteine 123–cysteine 134, cysteine 136–cysteine 145, cysteine 150–cysteine 160, cysteine 154–cysteine 166, and cysteine 168–cysteine 177. EGF-like domains follow at residues 81–112 (IVPI…PSCG), 115–146 (SIQH…THCG), and 147–178 (QPVC…PQCE). The interval 119–329 (CNIRCMNGGS…YTSPDGTRCI (211 aa)) is interaction with MFAP4. In terms of domain architecture, TB 1 spans 184-236 (GPCFTVVSNQMCQGQLSGIVCTKTLCCATVGRAWGHPCEMCPAQPHPCRRGFI). The tract at residues 195–221 (CQGQLSGIVCTKTLCCATVGRAWGHPC) is hybrid domain 1. The 42-residue stretch at 246–287 (DVDECQAIPGLCQGGNCINTVGSFECKCPAGHKFNEVSQKCE) folds into the EGF-like 4; calcium-binding domain. Cystine bridges form between cysteine 250–cysteine 262, cysteine 257–cysteine 271, cysteine 273–cysteine 286, cysteine 292–cysteine 304, cysteine 299–cysteine 313, and cysteine 315–cysteine 328. Serine 268 carries O-linked (Glc) serine glycosylation. Positions 288-329 (DIDECSTIPGICDGGECTNTVSSYFCKCPPGFYTSPDGTRCI) constitute an EGF-like 5; calcium-binding domain. Residues 334 to 389 (GYCYTALTNGRCSNQLPQSITKMQCCCDVGRCWSPGVTVTPEMCPIRATEDFNKLC) form the TB 2 domain. Asparagine 448 carries an N-linked (GlcNAc...) asparagine glycan. Residues 449–489 (VTDYCQLFRYLCHNGRCIPTPGSYRCECNKGFQLDLRGECI) enclose the EGF-like 6 domain. 15 cysteine pairs are disulfide-bonded: cysteine 453–cysteine 465, cysteine 460–cysteine 474, cysteine 476–cysteine 488, cysteine 494–cysteine 504, cysteine 499–cysteine 513, cysteine 515–cysteine 528, cysteine 534–cysteine 546, cysteine 541–cysteine 555, cysteine 557–cysteine 570, cysteine 576–cysteine 587, cysteine 582–cysteine 596, cysteine 598–cysteine 611, cysteine 617–cysteine 628, cysteine 623–cysteine 637, and cysteine 639–cysteine 652. Residue serine 471 is glycosylated (O-linked (Glc) serine). An EGF-like 7; calcium-binding domain is found at 490 to 529 (DVDECEKNPCAGGECINNQGSYTCQCRPGYQSTLTRTECR). O-linked (Glc) serine glycosylation occurs at serine 510. Residues 530-571 (DIDECLQNGRICNNGRCINTDGSFHCVCNAGFHVTRDGKNCE) form the EGF-like 8; calcium-binding domain. The region spanning 572 to 612 (DMDECSIRNMCLNGMCINEDGSFKCICKPGFQLASDGRYCK) is the EGF-like 9; calcium-binding domain. One can recognise an EGF-like 10; calcium-binding domain in the interval 613–653 (DINECETSGICMNGRCVNTDGSYRCECFPGLAVGLDGRVCV). Residues 659–711 (STCYGGYKRGQCVKPLFGAVTKSECCCASTEYAFGEPCQPCPSQNSAEYQALC) enclose the TB 3 domain. The EGF-like 11; calcium-binding domain maps to 723–764 (DINECALDPDICPNGICENLRGTYKCICNSGYEVDSTGKNCV). 16 disulfide bridges follow: cysteine 727-cysteine 739, cysteine 734-cysteine 748, cysteine 750-cysteine 763, cysteine 769-cysteine 781, cysteine 776-cysteine 790, cysteine 792-cysteine 805, cysteine 811-cysteine 821, cysteine 816-cysteine 830, cysteine 832-cysteine 845, cysteine 853-cysteine 875, cysteine 862-cysteine 887, cysteine 876-cysteine 890, cysteine 896-cysteine 908, cysteine 914-cysteine 926, cysteine 921-cysteine 935, and cysteine 937-cysteine 950. The 42-residue stretch at 765 to 806 (DINECVLNSLLCDNGQCRNTPGSFVCTCPKGFIYKPDLKTCE) folds into the EGF-like 12; calcium-binding domain. The region spanning 807-846 (DIDECESSPCINGVCKNSPGSFICECSSESTLDPTKTICI) is the EGF-like 13; calcium-binding domain. A TB 4 domain is found at 851-902 (GTCWQTIIDGRCEININGATLKSQCCSSLGAAWGSPCTPCQVDPICGKGYSR). The hybrid domain 2 stretch occupies residues 862–887 (CEININGATLKSQCCSSLGAAWGSPC). Residues 910 to 951 (DIDECEVFPGVCKNGLCVNSKGSFKCQCPNGMTLDATGRICL) form the EGF-like 14; calcium-binding domain. Residues 956–1008 (ETCFLRYEDEECTLPVVGRHRMDACCCSVGAAWGTEECEECPPRNTPEYEELC) enclose the TB 5 domain. Residues 1028–1069 (DINECKMIPNLCTHGKCRNTIGSFKCRCDSGFALDSEERNCI) enclose the EGF-like 15; calcium-binding domain. Intrachain disulfides connect cysteine 1032/cysteine 1044, cysteine 1039/cysteine 1053, cysteine 1055/cysteine 1068, cysteine 1074/cysteine 1086, cysteine 1081/cysteine 1095, cysteine 1097/cysteine 1111, cysteine 1117/cysteine 1129, cysteine 1124/cysteine 1138, cysteine 1140/cysteine 1153, cysteine 1159/cysteine 1171, cysteine 1201/cysteine 1212, cysteine 1208/cysteine 1221, cysteine 1223/cysteine 1236, cysteine 1242/cysteine 1254, cysteine 1249/cysteine 1263, cysteine 1265/cysteine 1278, cysteine 1284/cysteine 1296, cysteine 1291/cysteine 1305, cysteine 1307/cysteine 1320, cysteine 1326/cysteine 1339, cysteine 1333/cysteine 1348, cysteine 1350/cysteine 1361, cysteine 1367/cysteine 1380, cysteine 1374/cysteine 1389, cysteine 1391/cysteine 1402, cysteine 1408/cysteine 1420, cysteine 1415/cysteine 1429, cysteine 1450/cysteine 1461, cysteine 1456/cysteine 1470, cysteine 1472/cysteine 1485, cysteine 1491/cysteine 1502, cysteine 1497/cysteine 1511, cysteine 1513/cysteine 1526, cysteine 1534/cysteine 1562, cysteine 1549/cysteine 1574, cysteine 1563/cysteine 1577, cysteine 1564/cysteine 1589, cysteine 1610/cysteine 1622, cysteine 1617/cysteine 1631, cysteine 1633/cysteine 1646, cysteine 1652/cysteine 1663, cysteine 1658/cysteine 1672, and cysteine 1674/cysteine 1687. An EGF-like 16; calcium-binding domain is found at 1070–1112 (DIDECRISPDLCGRGQCVNTPGDFECKCDEGYESGFMMMKNCM). The EGF-like 17; calcium-binding domain maps to 1113-1154 (DIDECQRDPLLCRGGVCLNTEGSYRCECPSGHQMSPNISACI). An O-linked (Glc) serine glycan is attached at serine 1135. Asparagine 1149 carries an N-linked (GlcNAc...) asparagine glycan. The 42-residue stretch at 1155–1196 (DINECELSAHLCPHGRCVNLIGKYQRARNPGYHSTPDRLFCV) folds into the EGF-like 18; calcium-binding domain. In terms of domain architecture, EGF-like 19; calcium-binding spans 1197-1237 (DIDECSIMNGGCETFCTNSEGSYECSCQPGFALMPDQRSCT). Serine 1218 carries O-linked (Glc) serine glycosylation. One can recognise an EGF-like 20; calcium-binding domain in the interval 1238–1279 (DIDECEDNPNICDGGQCTNIPGEYRCLCYDGFMASEDMKTCV). Residues 1280 to 1321 (DVNECDLNPNICLSGTCENTKGSFICHCDMGYSGKKGKTGCT) form the EGF-like 21; calcium-binding domain. Serine 1302 carries an O-linked (Glc) serine glycan. Positions 1322–1362 (DINECEIGAHNCDRHAVCTNTAGSFNCSCSPGWIGDGIKCT) constitute an EGF-like 22; calcium-binding domain. O-linked (Glc) serine glycosylation occurs at serine 1345. N-linked (GlcNAc...) asparagine glycosylation occurs at asparagine 1347. Residues 1363–1403 (DLDECSNGTHMCSQHADCKNTMGSYRCLCKEGYTGDGFTCA) form the EGF-like 23; calcium-binding domain. N-linked (GlcNAc...) asparagine glycosylation is present at asparagine 1369. Serine 1386 carries O-linked (Glc) serine glycosylation. Positions 1404–1445 (DLDECSENVKLCGNVQCLYAPGGYHCEYDMGFVPSADRKSCV) constitute an EGF-like 24; calcium-binding domain. The 41-residue stretch at 1446-1486 (DSDECSLPNICVFGTCHNLPGLFRCECEIGYELDRSGGNCT) folds into the EGF-like 25; calcium-binding domain. A glycan (N-linked (GlcNAc...) asparagine) is linked at asparagine 1484. Residues 1487–1527 (DVNECLEPPTCISGNCVNTPGSYTCVCPPDFELNPTRVGCV) form the EGF-like 26; calcium-binding domain. Residue serine 1508 is glycosylated (O-linked (Glc) serine). The interval 1528–2731 (DTRSGNCYLD…GYPKRGRKRR (1204 aa)) is C-terminal domain. The 58-residue stretch at 1532 to 1589 (GNCYLDVRPRGDNGDTACSNEIGVGVSKASCCCSLGKAWGTPCEQCPPVNTSEYKILC) folds into the TB 6 domain. A Cell attachment site motif is present at residues 1541 to 1543 (RGD). Asparagine 1581 is a glycosylation site (N-linked (GlcNAc...) asparagine). Residues 1606–1647 (DIDECQELPGLCQGGKCINTFGSFQCRCPTGYYLNEDTRVCD) form the EGF-like 27; calcium-binding domain. Serine 1628 is a glycosylation site (O-linked (Glc) serine). In terms of domain architecture, EGF-like 28; calcium-binding spans 1648–1688 (DVNECETPGICGPGTCYNTVGNYTCICPPDYMQVNGGNNCM). An N-linked (GlcNAc...) asparagine glycan is attached at asparagine 1669. In terms of domain architecture, TB 7 spans 1693–1748 (SLCYRNYYADNQTCDGELLFNMTKKMCCCSYNIGRAWNKPCEQCPIPSTDEFATLC). N-linked (GlcNAc...) asparagine glycosylation is found at asparagine 1703 and asparagine 1713. One can recognise an EGF-like 29; calcium-binding domain in the interval 1766–1807 (DIDECREIPGVCENGVCINMVGSFRCECPVGFFYNDKLLVCE). Intrachain disulfides connect cysteine 1770/cysteine 1782, cysteine 1777/cysteine 1791, cysteine 1793/cysteine 1806, cysteine 1812/cysteine 1824, cysteine 1818/cysteine 1833, cysteine 1835/cysteine 1847, cysteine 1853/cysteine 1865, cysteine 1860/cysteine 1874, cysteine 1876/cysteine 1889, cysteine 1895/cysteine 1905, cysteine 1900/cysteine 1914, cysteine 1916/cysteine 1928, cysteine 1934/cysteine 1947, cysteine 1942/cysteine 1956, cysteine 1958/cysteine 1971, cysteine 1977/cysteine 1989, cysteine 1984/cysteine 1998, cysteine 2000/cysteine 2011, cysteine 2017/cysteine 2029, cysteine 2024/cysteine 2038, cysteine 2040/cysteine 2053, cysteine 2061/cysteine 2083, cysteine 2070/cysteine 2096, cysteine 2084/cysteine 2099, cysteine 2085/cysteine 2111, cysteine 2131/cysteine 2142, cysteine 2137/cysteine 2151, cysteine 2153/cysteine 2164, cysteine 2170/cysteine 2181, cysteine 2176/cysteine 2190, cysteine 2192/cysteine 2204, cysteine 2210/cysteine 2221, cysteine 2217/cysteine 2230, cysteine 2232/cysteine 2245, cysteine 2251/cysteine 2265, cysteine 2258/cysteine 2274, cysteine 2276/cysteine 2289, cysteine 2295/cysteine 2307, cysteine 2302/cysteine 2316, and cysteine 2318/cysteine 2331. In terms of domain architecture, EGF-like 30; calcium-binding spans 1808 to 1848 (DIDECQNGPVCQRNAECINTAGSYRCDCKPGYRFTSTGQCN). The O-linked (Glc) serine glycan is linked to serine 1830. Residues 1849 to 1890 (DRNECQEIPNICSHGQCIDTVGSFYCLCHTGFKTNADQTMCL) form the EGF-like 31; calcium-binding domain. Residue serine 1871 is glycosylated (O-linked (Glc) serine). Residues 1891-1929 (DINECERDACGNGTCRNTIGSFNCRCNHGFILSHNNDCI) form the EGF-like 32; calcium-binding domain. A glycan (N-linked (GlcNAc...) asparagine) is linked at asparagine 1902. The O-linked (Glc) serine glycan is linked to serine 1911. The EGF-like 33; calcium-binding domain occupies 1930–1972 (DVDECATGNGNLCRNGQCINTVGSFQCQCNEGYEVAPDGRTCV). O-linked (Glc) serine glycosylation is present at serine 1953. Residues 1973-2012 (DINECLLEPGKCAPGTCQNLDGSYRCICPPGYSLQNDKCE) form the EGF-like 34; calcium-binding domain. An EGF-like 35; calcium-binding domain is found at 2013 to 2054 (DIDECVEEPEICALGTCSNTEGSFKCLCPDGFSLSSTGRRCQ). O-linked (Glc) serine glycosylation is present at serine 2035. In terms of domain architecture, TB 8 spans 2059–2111 (SYCYAKFEGGKCSSPKSRNHSKQECCCALKGEGWGDPCELCPTEPDEAFRQIC). Asparagine 2077 carries N-linked (GlcNAc...) asparagine glycosylation. Residues 2127–2165 (DMDECKEPDVCKHGQCINTDGSYRCECPFGYILEGNECV) enclose the EGF-like 36; calcium-binding domain. Serine 2148 is a glycosylation site (O-linked (Glc) serine). Residues 2166-2205 (DTDECSVGNPCGNGTCKNVIGGFECTCEEGFEPGPMMTCE) form the EGF-like 37; calcium-binding domain. N-linked (GlcNAc...) asparagine glycosylation is present at asparagine 2178. Residues 2206–2246 (DINECAQNPLLCAFRCVNTYGSYECKCPTGYVLREDRRMCK) enclose the EGF-like 38; calcium-binding domain. An O-linked (Glc) serine glycan is attached at serine 2227. The EGF-like 39; calcium-binding domain maps to 2247 to 2290 (DEDECEEGKHDCAEKQMECKNLIGMYICICGPGYQRRPDGEGCV). One can recognise an EGF-like 40; calcium-binding domain in the interval 2291–2332 (DENECQTKPGICENGRCLNTRGSYTCECNDGFTASPTQDECL). The O-linked (Glc) serine glycan is linked to serine 2313. Residues 2337-2390 (GYCFTEVLQNMCQIGSSNRNPVTKSECCCDGGRGWGPHCEICPFQGTVAFKKLC) enclose the TB 9 domain. In terms of domain architecture, EGF-like 41; calcium-binding spans 2402-2443 (DIDECKVIHDVCRNGECINDRGSYHCICKTGYTPDITGTACV). Cystine bridges form between cysteine 2406–cysteine 2418, cysteine 2413–cysteine 2427, cysteine 2429–cysteine 2442, cysteine 2448–cysteine 2459, cysteine 2455–cysteine 2468, cysteine 2470–cysteine 2483, cysteine 2489–cysteine 2500, cysteine 2496–cysteine 2509, cysteine 2511–cysteine 2522, cysteine 2528–cysteine 2541, cysteine 2535–cysteine 2550, cysteine 2552–cysteine 2565, cysteine 2571–cysteine 2581, cysteine 2577–cysteine 2590, cysteine 2592–cysteine 2605, cysteine 2611–cysteine 2622, cysteine 2617–cysteine 2631, cysteine 2633–cysteine 2646, cysteine 2652–cysteine 2663, cysteine 2659–cysteine 2672, and cysteine 2674–cysteine 2686. The region spanning 2444–2484 (DLNECNQAPKPCNFICKNTEGSYQCSCPKGYILQEDGRSCK) is the EGF-like 42; calcium-binding domain. Serine 2465 carries an O-linked (Glc) serine glycan. The 39-residue stretch at 2485–2523 (DLDECATKQHNCQFLCVNTIGSFACKCPPGFTQHHTACI) folds into the EGF-like 43; calcium-binding domain. The region spanning 2524–2566 (DNNECTSDINLCGAKGICQNTPGSFTCECQRGFSLDQSGASCE) is the EGF-like 44; calcium-binding domain. Serine 2547 carries O-linked (Glc) serine glycosylation. The EGF-like 45; calcium-binding domain occupies 2567–2606 (DVDECEGNHRCQHGCQNIIGGYRCSCPQGYLQHYQWNQCV). One can recognise an EGF-like 46; calcium-binding domain in the interval 2607–2647 (DENECLSAHICGGASCHNTLGSYKCMCPAGFQYEQFSGGCQ). An O-linked (Glc) serine glycan is attached at serine 2628. Residues 2648–2687 (DINECGSSQAPCSYGCSNTEGGYLCGCPPGYFRIGQGHCV) form the EGF-like 47; calcium-binding domain. 2 positions are modified to phosphoserine: serine 2702 and serine 2709. 3 N-linked (GlcNAc...) asparagine glycosylation sites follow: asparagine 2734, asparagine 2750, and asparagine 2767.

The protein belongs to the fibrillin family. In terms of assembly, interacts with COL16A1. Interacts with integrin alpha-V/beta-3. Interacts with ADAMTS10; this interaction promotes microfibril assembly. Interacts with THSD4; this interaction promotes fibril formation. Interacts (via N-terminal domain) with FBLN2 and FBLN5. Interacts with ELN. Forms a ternary complex with ELN and FBLN2 or FBLN5 and a significant interaction with ELN seen only in the presence of FBLN2 or FBLN5. Interacts (via N-terminal domain) with LTBP2 (via C-terminal domain) in a Ca(+2)-dependent manner. Interacts (via N-terminal domain) with LTBP1 (via C-terminal domain). Interacts with integrins ITGA5:ITGB1, ITGAV:ITGB3 and ITGAV:ITGB6. Interacts (via N-terminal domain) with BMP2, BMP4, BMP7, BMP10 and GDF5. Interacts (via N-terminal domain) with MFAP2 and MFAP5. Interacts with ADAMTSL5. Interacts with MFAP4. Interacts (via N-terminal domain) with TNFSF11 in a Ca(+2)-dependent manner. Interacts (via N-terminal domain) with EFEMP2; this interaction inhibits EFEMP2 binding to LOX and ELN. Cleavage of N- and C-terminus by furin is required for incorporation into the extracellular matrix and assembly into microfibrils. The C-terminus, which corresponds to the Asprosin chain, was initially thought to constitute a propeptide. Fibrillin-1 and Asprosin chains are still linked together during the secretion from cells, but are subsequently separated by furin, an essential step for incorporation of Fibrillin-1 into the nascent microfibrils. Post-translationally, forms intermolecular disulfide bonds either with other fibrillin-1 molecules or with other components of the microfibrils. In terms of processing, O-glycosylated on serine residues by POGLUT2 and POGLUT3 which is necessary for efficient protein secretion.

The protein localises to the secreted. It localises to the extracellular space. The protein resides in the extracellular matrix. Structural component of the 10-12 nm diameter microfibrils of the extracellular matrix, which conveys both structural and regulatory properties to load-bearing connective tissues. Fibrillin-1-containing microfibrils provide long-term force bearing structural support. In tissues such as the lung, blood vessels and skin, microfibrils form the periphery of the elastic fiber, acting as a scaffold for the deposition of elastin. In addition, microfibrils can occur as elastin-independent networks in tissues such as the ciliary zonule, tendon, cornea and glomerulus where they provide tensile strength and have anchoring roles. Fibrillin-1 also plays a key role in tissue homeostasis through specific interactions with growth factors, such as the bone morphogenetic proteins (BMPs), growth and differentiation factors (GDFs) and latent transforming growth factor-beta-binding proteins (LTBPs), cell-surface integrins and other extracellular matrix protein and proteoglycan components. Regulates osteoblast maturation by controlling TGF-beta bioavailability and calibrating TGF-beta and BMP levels, respectively. Negatively regulates osteoclastogenesis by binding and sequestering an osteoclast differentiation and activation factor TNFSF11. This leads to disruption of TNFSF11-induced Ca(2+) signaling and impairment of TNFSF11-mediated nuclear translocation and activation of transcription factor NFATC1 which regulates genes important for osteoclast differentiation and function. Mediates cell adhesion via its binding to cell surface receptors integrins ITGAV:ITGB3 and ITGA5:ITGB1. Binds heparin and this interaction plays an important role in the assembly of microfibrils. Its function is as follows. Hormone that targets the liver to increase plasma glucose levels. Secreted by white adipose tissue and circulates in the plasma. Acts in response to fasting and promotes blood glucose elevation by binding to the surface of hepatocytes. Promotes hepatocyte glucose release by activating the protein kinase A activity in the liver, resulting in rapid glucose release into the circulation. In Sus scrofa (Pig), this protein is Fibrillin-1.